Reading from the N-terminus, the 259-residue chain is Binding partner of ACD11 1 (259 aa).

The region spanning 6–77 (RSVKVGNLSS…QSVIIELAPN (72 aa)) is the RRM domain. Positions 219–259 (GEVGQKTKEKVEAEQPSQPAQSQQQLPEGYSPIHSSEYSKN) are disordered. A compositionally biased stretch (low complexity) spans 232–243 (EQPSQPAQSQQQ).

Interacts with ACD11, PR1F2 and PR1F3.

It is found in the cytoplasm. The protein resides in the membrane. This is Binding partner of ACD11 1 (BPA1) from Arabidopsis thaliana (Mouse-ear cress).